We begin with the raw amino-acid sequence, 87 residues long: Putative BTB/POZ domain-containing protein At3g29740 (87 aa).

The 64-residue stretch at 24 to 87 (VDVRLKAGDS…KHTELVALVE (64 aa)) folds into the BTB domain.

The protein operates within protein modification; protein ubiquitination. Functionally, may act as a substrate-specific adapter of an E3 ubiquitin-protein ligase complex (CUL3-RBX1-BTB) which mediates the ubiquitination and subsequent proteasomal degradation of target proteins. This is Putative BTB/POZ domain-containing protein At3g29740 from Arabidopsis thaliana (Mouse-ear cress).